Reading from the N-terminus, the 251-residue chain is Probable transcriptional regulatory protein Caul_0780 (251 aa).

The protein belongs to the TACO1 family.

It localises to the cytoplasm. In Caulobacter sp. (strain K31), this protein is Probable transcriptional regulatory protein Caul_0780.